A 699-amino-acid chain; its full sequence is UV radiation resistance-associated gene protein (699 aa).

The span at 1-10 (MSASASVGGP) shows a compositional bias: low complexity. The tract at residues 1 to 24 (MSASASVGGPVPQPPPGPAAALPP) is disordered. The 127-residue stretch at 23 to 149 (PPGSAARALH…YLGQQIHARN (127 aa)) folds into the C2 domain. The tract at residues 200 to 269 (HRAQCAIKQT…REVALLHKQQ (70 aa)) is sufficient for interaction with STX7; VTI1B AND STX8. A coiled-coil region spans residues 224–305 (LRLTSTSNEL…LRKECTAKRE (82 aa)). A sufficient for interaction with VPS16, required for interaction with CEP63 region spans residues 270 to 442 (IALQDKGSAF…IAQLRYQHGL (173 aa)). A required for interaction with PRKDC, XRCC6 and XRCC5 region spans residues 443–699 (GTPDLRQTLP…FRRPRRSSDK (257 aa)). The segment at 486-591 (GGADVGFSGG…SQEQGEALSG (106 aa)) is disordered. The residue at position 493 (Ser-493) is a Phosphoserine. A Phosphoserine; by MTOR modification is found at Ser-498. Ser-508 bears the Phosphoserine mark. Thr-518 carries the post-translational modification Phosphothreonine. Phosphoserine is present on Ser-522. A compositionally biased stretch (polar residues) spans 523–535 (YNSALAQPVTTVP). Low complexity predominate over residues 545-556 (TSLSSSLDTSLD). Residues Ser-549 and Ser-550 each carry the phosphoserine modification. Residues 557–567 (FSKENKKKGED) show a composition bias toward basic and acidic residues. A phosphoserine mark is found at Ser-571, Ser-582, and Ser-689.

Component of the PI3K (PI3KC3/PI3K-III/class III phosphatidylinositol 3-kinase) complex II (PI3KC3-C2) in which the core composed of the catalytic subunit PIK3C3, the regulatory subunit PIK3R4 and BECN1 is associated with UVRAG; in the complex interacts directly with BECN1. PI3KC3-C2 can associate with further regulatory subunits such as RUBCN and probably SH3GLB1/Bif-1. Interacts with SH3GLB1; UVRAG bridges the interaction to BECN1 indicative for an association with the PI3K complex PI3KC3-C2. Interacts with RINT1. Associates with the NRZ complex under basal conditions and dissociates from it under autophagy conditions to associate with the PI3K complex; these complex associations seem to be mutually exclusive. Interacts with VPS16; VPS11; VPS18; VPS33 (VPS33A or VPS33B) and VPS39; indicative for an association with a class C Vps tethering complex (possibly the HOPS complex). Interacts with RAB7A; RAB7A competes with UVRAG for RUBCN binding. Interacts with STX7, VTI1B, STX8. Interacts with PRKDC, XRCC6 and XRCC5; indicative for an association with the DNA-dependent protein kinase complex DNA-PK. Interacts with CEP63. Directly interacts with FEZ1 and SCOC; the interaction with SCOC is reduced by amino acid starvation, but the complex is stabilized in the presence of FEZ1. Interacts with BECN1P1/BECN2. Interacts with SLAMF1. Interacts with RUBCNL/PACER; promoting targeting of UVRAG to autophagosome. Interacts with WNK1. In terms of processing, phosphorylated at Ser-498 by MTOR under basal conditions; increases the interaction with RUBCN implicated in inhibitory effect of RUBCN on PI3KC3 and decreases interaction with RAB7,A and VPS16 and VPS39 (indicative for a class C Vps complex, possibly the HOPS complex). In terms of tissue distribution, highly expressed in brain, lung, kidney and liver.

Its subcellular location is the late endosome. The protein localises to the lysosome. It localises to the cytoplasmic vesicle. It is found in the autophagosome. The protein resides in the early endosome. Its subcellular location is the endoplasmic reticulum. The protein localises to the midbody. It localises to the chromosome. It is found in the centromere. Its function is as follows. Versatile protein that is involved in regulation of different cellular pathways implicated in membrane trafficking. Involved in regulation of the COPI-dependent retrograde transport from Golgi and the endoplasmic reticulum by associating with the NRZ complex; the function is dependent on its binding to phosphatidylinositol 3-phosphate (PtdIns(3)P). During autophagy acts as a regulatory subunit of the alternative PI3K complex II (PI3KC3-C2) that mediates formation of phosphatidylinositol 3-phosphate and is believed to be involved in maturation of autophagosomes and endocytosis. Activates lipid kinase activity of PIK3C3. Involved in the regulation of degradative endocytic trafficking and cytokinesis, and in regulation of ATG9A transport from the Golgi to the autophagosome; the functions seems to implicate its association with PI3KC3-C2. Involved in maturation of autophagosomes and degradative endocytic trafficking independently of BECN1 but depending on its association with a class C Vps complex (possibly the HOPS complex); the association is also proposed to promote autophagosome recruitment and activation of Rab7 and endosome-endosome fusion events. Enhances class C Vps complex (possibly HOPS complex) association with a SNARE complex and promotes fusogenic SNARE complex formation during late endocytic membrane fusion. In case of negative-strand RNA virus infection is required for efficient virus entry, promotes endocytic transport of virions and is implicated in a VAMP8-specific fusogenic SNARE complex assembly. Involved in maintaining chromosomal stability. Promotes DNA double-strand break (DSB) repair by association with DNA-dependent protein kinase complex DNA-PK and activating it in non-homologous end joining (NHEJ). Required for centrosome stability and proper chromosome segregation. This Homo sapiens (Human) protein is UV radiation resistance-associated gene protein (UVRAG).